Here is a 605-residue protein sequence, read N- to C-terminus: Glycerophosphodiester phosphodiesterase domain-containing protein 5 (605 aa).

At 1-42 the chain is on the cytoplasmic side; that stretch reads MVRHQPLQYYEPQLCLSCLTGIYGCRWKRYQRSHDDTTPWER. 2 disulfide bridges follow: Cys-15–Cys-18 and Cys-25–Cys-571. Residues 43-63 traverse the membrane as a helical segment; it reads LWFLLLTFTFGLTLTWLYFWW. Over 64-89 the chain is Extracellular; it reads EVHNDYDEFNWYLYNRMGYWSDWPVP. Residues 90–110 form a helical membrane-spanning segment; sequence ILVTTAAAFAYIAGLLVLALC. Residues 111–125 are Cytoplasmic-facing; sequence HIAVGQQMNLHWLHK. A helical membrane pass occupies residues 126-146; that stretch reads IGLVVILASTVVAMSAVAQLW. Residues 147–160 are Extracellular-facing; it reads EDEWEVLLISLQGT. A helical transmembrane segment spans residues 161 to 181; that stretch reads APFLHVGAVAAVTMLSWIVAG. Topologically, residues 182-192 are cytoplasmic; the sequence is QFARAERTSSQ. Residues 193-213 form a helical membrane-spanning segment; the sequence is VTILCTFFTVVFALYLAPLTI. Topologically, residues 214 to 496 are extracellular; the sequence is SSPCIMEKKD…PLWIMPPDEY (283 aa). Positions 228–485 constitute a GP-PDE domain; sequence PALIGHRGAP…DNSHALSQVP (258 aa). 5 N-linked (GlcNAc...) asparagine glycosylation sites follow: Asn-301, Asn-336, Asn-352, Asn-374, and Asn-448. Residues 497-517 form a helical membrane-spanning segment; the sequence is CLMWVTADLVSFTLIVGIFVL. Residues 518–605 are Cytoplasmic-facing; the sequence is QKWRLGGIRS…TKTLIERSGR (88 aa). Residues 582–605 form a disordered region; that stretch reads STATPVGPRGGGSHTKTLIERSGR.

It belongs to the glycerophosphoryl diester phosphodiesterase family. In terms of assembly, interacts with PRDX1; forms a mixed-disulfide with PRDX1, leading to disrupt intramolecular disulfide bond between Cys-25 and Cys-571. Post-translationally, intramolecular disulfide bond between Cys-25 and Cys-571 is reduced by PRDX1.

It is found in the endomembrane system. Its subcellular location is the cytoplasm. The protein localises to the perinuclear region. The protein resides in the cell projection. It localises to the growth cone. The catalysed reaction is a 1,2-diacyl-sn-glycero-3-phospho-(1D-myo-inositol-4,5-bisphosphate) + H2O = 1D-myo-inositol 1,4,5-trisphosphate + a 1,2-diacyl-sn-glycerol + H(+). It carries out the reaction sn-glycerol 3-phosphocholine + H2O = sn-glycerol 3-phosphate + choline + H(+). Its function is as follows. Glycerophosphodiester phosphodiesterase that promotes neurite formation and drives spinal motor neuron differentiation. Mediates the cleavage of glycosylphosphatidylinositol (GPI) anchor of target proteins: removes the GPI-anchor of RECK, leading to release RECK from the plasma membrane. May contribute to the osmotic regulation of cellular glycerophosphocholine. The chain is Glycerophosphodiester phosphodiesterase domain-containing protein 5 from Homo sapiens (Human).